We begin with the raw amino-acid sequence, 122 residues long: UPF0382 membrane protein SAB0533 (122 aa).

4 consecutive transmembrane segments (helical) span residues Leu3–Ala23, Met46–Val66, Ala69–Leu89, and Ile98–Phe118.

The protein belongs to the UPF0382 family.

It localises to the cell membrane. This is UPF0382 membrane protein SAB0533 from Staphylococcus aureus (strain bovine RF122 / ET3-1).